A 384-amino-acid chain; its full sequence is Monomethylxanthine methyltransferase 2 (384 aa).

S-adenosyl-L-homocysteine contacts are provided by Tyr-18, Cys-61, Asn-66, Asp-100, Leu-101, Ser-139, Phe-140, and Cys-156. Theobromine contacts are provided by Tyr-157, His-160, and Trp-161. Mg(2+) is bound by residues Asn-178, Phe-262, and Asn-263. Tyr-368 contacts theobromine.

This sequence belongs to the methyltransferase superfamily. Type-7 methyltransferase family. Mg(2+) is required as a cofactor. As to expression, expressed, at low levels, in young leaves, floral buds and immature fruits (grains), but not in old leaves and mature fruits. Highly expressed in developing endosperm and flower buds. Detected in young leaves.

The enzyme catalyses 7-methylxanthine + S-adenosyl-L-methionine = theobromine + S-adenosyl-L-homocysteine + H(+). Its pathway is alkaloid biosynthesis. Its function is as follows. Involved in the biosynthesis of caffeine. Catalyzes the conversion of 7-methylxanthine (7mX) to theobromine and with a lower activity of paraxanthine to caffeine. Does not have 1-N-methylation activity. The sequence is that of Monomethylxanthine methyltransferase 2 from Coffea arabica (Arabian coffee).